A 295-amino-acid chain; its full sequence is MNANGGHDIQLVIITGMSGAGKTVAIQSFEDLGFFCVDNLPPSLLPKFLELMKESSSKMSKVALVMDLRGREFFDSLIEALDEIGETSWITPRILFLDAKDSVLVSRYKETRRSHPLATTGLPLEGIQTERELLEELKGRSQIIYDTSDMKPKDLREKIVQHFAADHGHTFTVNVMSFGFKYGLPIDADLVFDVRFLPNPYYIDSMRPLTGKDQEVSSYVMKWNETQKFLEKLTELLSFMLPSYKREGKSQLVIAIGCTGGQHRSVTLAEYLADYFKKDYYTHVTHRDIEKKSRK.

16–23 (GMSGAGKT) contributes to the ATP binding site. 67-70 (DLRG) lines the GTP pocket.

The protein belongs to the RapZ-like family.

Displays ATPase and GTPase activities. The protein is Nucleotide-binding protein BLi03725/BL03417 of Bacillus licheniformis (strain ATCC 14580 / DSM 13 / JCM 2505 / CCUG 7422 / NBRC 12200 / NCIMB 9375 / NCTC 10341 / NRRL NRS-1264 / Gibson 46).